We begin with the raw amino-acid sequence, 410 residues long: Sulfate adenylyltransferase (410 aa).

It belongs to the sulfate adenylyltransferase family.

The catalysed reaction is sulfate + ATP + H(+) = adenosine 5'-phosphosulfate + diphosphate. It participates in sulfur metabolism; hydrogen sulfide biosynthesis; sulfite from sulfate: step 1/3. The protein is Sulfate adenylyltransferase of Syntrophobacter fumaroxidans (strain DSM 10017 / MPOB).